Consider the following 303-residue polypeptide: Phosphatidylglycerol--prolipoprotein diacylglyceryl transferase (303 aa).

A run of 4 helical transmembrane segments spans residues 18–38, 58–78, 106–126, and 133–153; these read LGPFSLRWYGLLIAISVLVGL, LLPILVLASVIGARIYYVAFE, IWGGGIAIHGALIMGTLSIIF, and EPFWDVIDVLVPSVALGQAIG. Arg-154 serves as a coordination point for a 1,2-diacyl-sn-glycero-3-phospho-(1'-sn-glycerol). 3 helical membrane passes run 193–213, 223–243, and 266–286; these read PTFLYESVWNIFVFGILIFLF, LPPGSLSCLYLITYSLGRFWI, and IAQLISLFLISAGLLGIWRIY.

Belongs to the Lgt family.

Its subcellular location is the cell inner membrane. It carries out the reaction L-cysteinyl-[prolipoprotein] + a 1,2-diacyl-sn-glycero-3-phospho-(1'-sn-glycerol) = an S-1,2-diacyl-sn-glyceryl-L-cysteinyl-[prolipoprotein] + sn-glycerol 1-phosphate + H(+). Its pathway is protein modification; lipoprotein biosynthesis (diacylglyceryl transfer). Functionally, catalyzes the transfer of the diacylglyceryl group from phosphatidylglycerol to the sulfhydryl group of the N-terminal cysteine of a prolipoprotein, the first step in the formation of mature lipoproteins. This is Phosphatidylglycerol--prolipoprotein diacylglyceryl transferase from Prochlorococcus marinus (strain NATL1A).